The following is a 341-amino-acid chain: DNA repair protein XRCC3 (341 aa).

N-acetylmethionine is present on methionine 1. 107 to 114 contacts ATP; sequence GRSSAGKT.

This sequence belongs to the RecA family. RAD51 subfamily. In terms of assembly, interacts with RAD51C and RAD51. Part of the CX3 complex consisting of RAD51C and XRCC3; the complex has a ring-like structure arranged into a flat disc around a central channel; CX3 can interact with RAD51 in vitro. Forms a complex with FANCD2, BRCA2 and phosphorylated FANCG. Interacts with SWSAP1 and ZSWIM7; involved in homologous recombination repair. Interacts directly with PALB2 which may serve as a scaffold for a HR complex containing PALB2, BRCA2, RAD51C, RAD51 and XRCC3.

It is found in the nucleus. The protein resides in the cytoplasm. Its subcellular location is the perinuclear region. It localises to the mitochondrion matrix. In terms of biological role, involved in the homologous recombination repair (HRR) pathway of double-stranded DNA, thought to repair chromosomal fragmentation, translocations and deletions. Part of the RAD21 paralog protein complex CX3 which acts in the BRCA1-BRCA2-dependent HR pathway. Upon DNA damage, CX3 acts downstream of RAD51 recruitment; the complex binds predominantly to the intersection of the four duplex arms of the Holliday junction (HJ) and to junctions of replication forks. Involved in HJ resolution and thus in processing HR intermediates late in the DNA repair process; the function may be linked to the CX3 complex and seems to involve GEN1 during mitotic cell cycle progression. Part of a PALB2-scaffolded HR complex containing BRCA2 and RAD51C and which is thought to play a role in DNA repair by HR. Plays a role in regulating mitochondrial DNA copy number under conditions of oxidative stress in the presence of RAD51 and RAD51C. The chain is DNA repair protein XRCC3 (XRCC3) from Bos taurus (Bovine).